We begin with the raw amino-acid sequence, 142 residues long: Large ribosomal subunit protein uL11 (142 aa).

Belongs to the universal ribosomal protein uL11 family. Part of the ribosomal stalk of the 50S ribosomal subunit. Interacts with L10 and the large rRNA to form the base of the stalk. L10 forms an elongated spine to which L12 dimers bind in a sequential fashion forming a multimeric L10(L12)X complex. One or more lysine residues are methylated.

In terms of biological role, forms part of the ribosomal stalk which helps the ribosome interact with GTP-bound translation factors. In Mycobacterium tuberculosis (strain ATCC 25177 / H37Ra), this protein is Large ribosomal subunit protein uL11.